The chain runs to 289 residues: MKKEQVLIEALPYIREFYDSIMVIKIGGSIMTNHEILENFIQDIILLKYIGIHPVVVHGGGPEISETMKRLGKKAEFVAGLRVTDRETLEIARMVLLGNINAELVSLIGKHGGKGIGLSGKDGMLIVARKKPPMNVNGENVDLGYVGEVEEINPEILMITAGKGYIPVISPIAIDRDGNSLNVNADTVAGAVAVALRAKKLISITDVEGVREDPDDPGRVISQFSPSEFQRLVERGIIKGGMIPKVEACVRAVERGVEKAHIIDGRIPHAIILELLTDAGIGTMISNIT.

Substrate-binding positions include 60–61 (GG), Arg-82, and Asn-182.

Belongs to the acetylglutamate kinase family. ArgB subfamily.

The protein resides in the cytoplasm. The catalysed reaction is N-acetyl-L-glutamate + ATP = N-acetyl-L-glutamyl 5-phosphate + ADP. It functions in the pathway amino-acid biosynthesis; L-arginine biosynthesis; N(2)-acetyl-L-ornithine from L-glutamate: step 2/4. Catalyzes the ATP-dependent phosphorylation of N-acetyl-L-glutamate. The protein is Acetylglutamate kinase of Methanothrix thermoacetophila (strain DSM 6194 / JCM 14653 / NBRC 101360 / PT) (Methanosaeta thermophila).